We begin with the raw amino-acid sequence, 269 residues long: Thymidylate synthase (269 aa).

Residue Arg21 coordinates dUMP. His51 serves as a coordination point for (6R)-5,10-methylene-5,6,7,8-tetrahydrofolate. 126–127 is a dUMP binding site; the sequence is RR. The Nucleophile role is filled by Cys146. DUMP contacts are provided by residues 171-174, Asn182, and 212-214; these read RSGD and HLY. Asp174 provides a ligand contact to (6R)-5,10-methylene-5,6,7,8-tetrahydrofolate. Ala268 serves as a coordination point for (6R)-5,10-methylene-5,6,7,8-tetrahydrofolate.

The protein belongs to the thymidylate synthase family. Bacterial-type ThyA subfamily. Homodimer.

The protein resides in the cytoplasm. It carries out the reaction dUMP + (6R)-5,10-methylene-5,6,7,8-tetrahydrofolate = 7,8-dihydrofolate + dTMP. Its pathway is pyrimidine metabolism; dTTP biosynthesis. In terms of biological role, catalyzes the reductive methylation of 2'-deoxyuridine-5'-monophosphate (dUMP) to 2'-deoxythymidine-5'-monophosphate (dTMP) while utilizing 5,10-methylenetetrahydrofolate (mTHF) as the methyl donor and reductant in the reaction, yielding dihydrofolate (DHF) as a by-product. This enzymatic reaction provides an intracellular de novo source of dTMP, an essential precursor for DNA biosynthesis. The polypeptide is Thymidylate synthase (Methylocella silvestris (strain DSM 15510 / CIP 108128 / LMG 27833 / NCIMB 13906 / BL2)).